A 264-amino-acid chain; its full sequence is Phosphate import ATP-binding protein PstB (264 aa).

In terms of domain architecture, ABC transporter spans 11 to 250; the sequence is LKAEALSVYY…DTTEKIFDSP (240 aa). Position 43 to 50 (43 to 50) interacts with ATP; sequence GPSGCGKS.

The protein belongs to the ABC transporter superfamily. Phosphate importer (TC 3.A.1.7) family. The complex is composed of two ATP-binding proteins (PstB), two transmembrane proteins (PstC and PstA) and a solute-binding protein (PstS).

The protein resides in the cell inner membrane. It carries out the reaction phosphate(out) + ATP + H2O = ADP + 2 phosphate(in) + H(+). Functionally, part of the ABC transporter complex PstSACB involved in phosphate import. Responsible for energy coupling to the transport system. This Synechococcus elongatus (strain ATCC 33912 / PCC 7942 / FACHB-805) (Anacystis nidulans R2) protein is Phosphate import ATP-binding protein PstB.